Reading from the N-terminus, the 143-residue chain is Interleukin-4 (143 aa).

An N-terminal signal peptide occupies residues 1–19; sequence MGLSPQLAAVLLCLLVCTG. Intrachain disulfides connect cysteine 48–cysteine 88 and cysteine 70–cysteine 115. Residues asparagine 62 and asparagine 91 are each glycosylated (N-linked (GlcNAc...) asparagine).

This sequence belongs to the IL-4/IL-13 family.

Its subcellular location is the secreted. Participates in at least several B-cell activation processes as well as of other cell types. It is a costimulator of DNA-synthesis. It induces the expression of class II MHC molecules on resting B-cells. It enhances both secretion and cell surface expression of IgE and IgG1. It also regulates the expression of the low affinity Fc receptor for IgE (CD23) on both lymphocytes and monocytes. Positively regulates IL31RA expression in macrophages. Stimulates autophagy in dendritic cells by interfering with mTORC1 signaling and through the induction of RUFY4. This Meriones unguiculatus (Mongolian jird) protein is Interleukin-4 (IL4).